The following is a 313-amino-acid chain: Solute carrier family 25 member 36 (313 aa).

3 Solcar repeats span residues 4 to 110 (RDTL…CKEK), 118 to 205 (DSTQ…IKRK), and 226 to 310 (SDFV…VVYL). Transmembrane regions (helical) follow at residues 7–27 (LVHL…TCPL), 41–57 (LYIS…ASVN), 113–133 (NIFN…AGFT), 182–202 (MSAS…YESI), 228–248 (FVGM…IAYP), and 293–313 (QIPN…LLDG).

This sequence belongs to the mitochondrial carrier (TC 2.A.29) family.

It is found in the mitochondrion inner membrane. Mitochondrial transporter that imports/exports pyrimidine nucleotides into and from mitochondria. Transports preferentially cytosine and uracil (deoxy)nucleoside mono-, di-, and triphosphates by uniport and antiport mechanism. This Gallus gallus (Chicken) protein is Solute carrier family 25 member 36 (SLC25A36).